A 356-amino-acid polypeptide reads, in one-letter code: Neutral protease 2 homolog UREG_03761 (356 aa).

A signal peptide spans 1-19 (MRFSSSFLSVLALASQALA). A propeptide spanning residues 20-181 (FPLNDLPTTD…ALPEATLDKR (162 aa)) is cleaved from the precursor. 2 disulfides stabilise this stretch: Cys-189-Cys-259 and Cys-266-Cys-284. Residue His-308 participates in Zn(2+) binding. Glu-309 is an active-site residue. Residues His-312 and Asp-323 each coordinate Zn(2+).

Belongs to the peptidase M35 family. It depends on Zn(2+) as a cofactor.

The protein localises to the secreted. The enzyme catalyses Preferential cleavage of bonds with hydrophobic residues in P1'. Also 3-Asn-|-Gln-4 and 8-Gly-|-Ser-9 bonds in insulin B chain.. In terms of biological role, secreted metalloproteinase that allows assimilation of proteinaceous substrates. Shows high activities on basic nuclear substrates such as histone and protamine. The chain is Neutral protease 2 homolog UREG_03761 from Uncinocarpus reesii (strain UAMH 1704).